Consider the following 4574-residue polypeptide: E3 ubiquitin-protein ligase MYCBP2 (4574 aa).

Disordered regions lie at residues 92–115 and 599–620; these read RGKKALSKKKLKRRQKVKSKVKTR and SASKGEDGESTKSRRQPKPYKP. RCC1 repeat units lie at residues 591 to 646, 690 to 746, 943 to 993, and 995 to 1051; these read DGSV…IVTK, SGEV…MMCQ, NGDV…VLLM, and GQVF…LRID. Over residues 611–620 the composition is skewed to basic residues; the sequence is SRRQPKPYKP. A disulfide bridge links cysteine 1733 with cysteine 1850. 2 disordered regions span residues 1976 to 1998 and 2313 to 2332; these read APPTFNPNQSTDSTTGNQPEQGL and LQRLPGTSSNSATGTDLTFG. Polar residues-rich tracts occupy residues 1981 to 1998 and 2317 to 2328; these read NPNQSTDSTTGNQPEQGL and PGTSSNSATGTD. The stretch at 2336–2417 is one Filamin repeat; sequence APKLEATYEP…IHVTIDGIEI (82 aa). Disordered stretches follow at residues 2613-2824, 2845-2922, 3085-3116, 3345-3365, and 3505-3526; these read GFDY…PSPH, SNDE…KQAM, SPGSSAILKKKENEKDSKKTKKEKKKKEKAEV, PGSNMKSMPPSLETSPITDSD, and FETEEEEDEENKGNKENLEQEK. Composition is skewed to basic and acidic residues over residues 2639–2663 and 2678–2688; these read HRQESRSSKTDSHSNRSVDQVKSKN and DTGKLRSDSHS. Residues 2716–2729 show a composition bias toward polar residues; the sequence is NPGSRSSSPKQKTF. Over residues 2730-2745 the composition is skewed to low complexity; that stretch reads TSGRSSPSSTSSPRSS. 3 stretches are compositionally biased toward basic and acidic residues: residues 2761–2772, 2854–2864, and 2874–2883; these read VHLDPPRERSKS, SELHNAEEGSS, and PVKEELESRS. 2 stretches are compositionally biased toward basic residues: residues 2887–2900 and 3102–3111; these read VSRKTSSRHVRPKK and KKTKKEKKKK. Residues 3515-3526 show a composition bias toward basic and acidic residues; that stretch reads NKGNKENLEQEK. The DOC domain occupies 3617–3795; that stretch reads FNISVQSGYE…SVAQQKNCEA (179 aa). The segment at 3815–3841 is disordered; the sequence is GDAEPTPEQEEKNLLSSPEGEDKAPSD. 10 residues coordinate Zn(2+): cysteine 4324, cysteine 4327, cysteine 4342, histidine 4344, histidine 4347, cysteine 4350, cysteine 4371, cysteine 4374, cysteine 4440, and cysteine 4443. The RING-type; atypical zinc finger occupies 4324 to 4375; that stretch reads CMICFTEALSAAPAIQLDCSHVFHLQCTRRVLENRWLGPRITFGFMSCPICK. The tract at residues 4435-4572 is tandem cysteine domain; that stretch reads YAYYVCFKCK…LGCGVCRNAH (138 aa). Cysteine 4454 is an active-site residue. 7 residues coordinate Zn(2+): cysteine 4471, cysteine 4474, cysteine 4483, histidine 4486, cysteine 4495, cysteine 4498, and cysteine 4499. Cysteine 4506 is a catalytic residue. Cysteine 4513, cysteine 4516, cysteine 4534, cysteine 4548, histidine 4554, cysteine 4565, and cysteine 4568 together coordinate Zn(2+).

This sequence belongs to the RING-Cys relay (RCR) family. As to expression, widely expressed when the visual system begins developing. In the eye, expressed in all cells, including retinal ganglion cells, with no obvious gradient.

It is found in the nucleus. The protein localises to the cell projection. Its subcellular location is the axon. The protein resides in the cytoplasm. It localises to the cytoskeleton. The enzyme catalyses [E2 ubiquitin-conjugating enzyme]-S-ubiquitinyl-L-cysteine + [acceptor protein]-L-threonine = [E2 ubiquitin-conjugating enzyme]-L-cysteine + [acceptor protein]-3-O-ubiquitinyl-L-threonine.. Its pathway is protein modification; protein ubiquitination. In terms of biological role, atypical E3 ubiquitin-protein ligase which specifically mediates ubiquitination of threonine and serine residues on target proteins, instead of ubiquitinating lysine residues. Shows esterification activity towards both threonine and serine, with a preference for threonine, and acts via two essential catalytic cysteine residues that relay ubiquitin to its substrate via thioester intermediates. Interacts with the E2 enzymes UBE2D1, UBE2D3, UBE2E1 and UBE2L3. Plays a key role in neural development, probably by mediating ubiquitination of threonine residues on target proteins. Involved in different processes such as regulation of neurite outgrowth, synaptic growth, synaptogenesis and axon degeneration. Required in the visual system for correct fasciculation, targeting and mapping of retinal axons. Acts as a regulator of pteridine synthesis. May play a role in the regulation of the circadian clock gene expression. The sequence is that of E3 ubiquitin-protein ligase MYCBP2 from Danio rerio (Zebrafish).